The following is a 60-amino-acid chain: MKAIIFLFAVLTVVAIIIPIISGEPNAGPHAASIDLNEIMKKMGPDLLKMLDDIKTKIQG.

The signal sequence occupies residues 1–23; sequence MKAIIFLFAVLTVVAIIIPIISG. Positions 24–33 are excised as a propeptide; that stretch reads EPNAGPHAAS. Q59 bears the Glutamine amide mark.

Belongs to the formicidae venom clade 2 family. Expressed by the venom gland.

Its subcellular location is the secreted. Its function is as follows. Toxin that causes a rapid and irreversible paralysis when intrathoracically injected into insects (blowflies). Does not cause spontaneous nocifensive behaviors by intraplantar injection in mice. This is Myrmicitoxin(1)-Pr4b from Pogonomyrmex rugosus (Desert harvester ant).